The chain runs to 353 residues: RNA 3'-terminal phosphate cyclase (353 aa).

Residues Q103 and H297–Q301 contribute to the ATP site. The Tele-AMP-histidine intermediate role is filled by H322.

It belongs to the RNA 3'-terminal cyclase family. Type 1 subfamily.

It is found in the cytoplasm. It catalyses the reaction a 3'-end 3'-phospho-ribonucleotide-RNA + ATP = a 3'-end 2',3'-cyclophospho-ribonucleotide-RNA + AMP + diphosphate. In terms of biological role, catalyzes the conversion of 3'-phosphate to a 2',3'-cyclic phosphodiester at the end of RNA. The mechanism of action of the enzyme occurs in 3 steps: (A) adenylation of the enzyme by ATP; (B) transfer of adenylate to an RNA-N3'P to produce RNA-N3'PP5'A; (C) and attack of the adjacent 2'-hydroxyl on the 3'-phosphorus in the diester linkage to produce the cyclic end product. The biological role of this enzyme is unknown but it is likely to function in some aspects of cellular RNA processing. This Salmonella heidelberg (strain SL476) protein is RNA 3'-terminal phosphate cyclase.